Consider the following 508-residue polypeptide: Photosystem II CP47 reaction center protein (508 aa).

Helical transmembrane passes span 21-36, 101-115, 140-156, 203-218, 237-252, and 457-472; these read SVHI…WAGS, IVFS…IWHW, GIHL…FGAF, IAAG…FHLS, VLSS…AFVV, and TFAL…HGAR.

Belongs to the PsbB/PsbC family. PsbB subfamily. In terms of assembly, PSII is composed of 1 copy each of membrane proteins PsbA, PsbB, PsbC, PsbD, PsbE, PsbF, PsbH, PsbI, PsbJ, PsbK, PsbL, PsbM, PsbT, PsbX, PsbY, PsbZ, Psb30/Ycf12, at least 3 peripheral proteins of the oxygen-evolving complex and a large number of cofactors. It forms dimeric complexes. Requires Binds multiple chlorophylls. PSII binds additional chlorophylls, carotenoids and specific lipids. as cofactor.

The protein localises to the plastid. It localises to the chloroplast thylakoid membrane. Functionally, one of the components of the core complex of photosystem II (PSII). It binds chlorophyll and helps catalyze the primary light-induced photochemical processes of PSII. PSII is a light-driven water:plastoquinone oxidoreductase, using light energy to abstract electrons from H(2)O, generating O(2) and a proton gradient subsequently used for ATP formation. This Drimys granadensis protein is Photosystem II CP47 reaction center protein.